Reading from the N-terminus, the 374-residue chain is PqqA peptide cyclase (374 aa).

The Radical SAM core domain maps to 13–230 (VPAPIAMLAE…EAEARLRGTL (218 aa)). Positions 27, 31, and 34 each coordinate [4Fe-4S] cluster.

The protein belongs to the radical SAM superfamily. PqqE family. In terms of assembly, interacts with PqqD. The interaction is necessary for activity of PqqE. [4Fe-4S] cluster serves as cofactor.

The catalysed reaction is [PQQ precursor protein] + S-adenosyl-L-methionine = E-Y cross-linked-[PQQ precursor protein] + 5'-deoxyadenosine + L-methionine + H(+). The protein operates within cofactor biosynthesis; pyrroloquinoline quinone biosynthesis. Functionally, catalyzes the cross-linking of a glutamate residue and a tyrosine residue in the PqqA protein as part of the biosynthesis of pyrroloquinoline quinone (PQQ). This Ruegeria pomeroyi (strain ATCC 700808 / DSM 15171 / DSS-3) (Silicibacter pomeroyi) protein is PqqA peptide cyclase.